The following is a 254-amino-acid chain: Nickel import ATP-binding protein NikD (254 aa).

Residues 2–241 form the ABC transporter domain; it reads PQQIELRNIA…PKHTVTRSLV (240 aa). 36–43 contacts ATP; sequence GGSGSGKS.

The protein belongs to the ABC transporter superfamily. Nickel importer (TC 3.A.1.5.3) family. In terms of assembly, the complex is composed of two ATP-binding proteins (NikD and NikE), two transmembrane proteins (NikB and NikC) and a solute-binding protein (NikA).

It is found in the cell inner membrane. The catalysed reaction is Ni(2+)(out) + ATP + H2O = Ni(2+)(in) + ADP + phosphate + H(+). Functionally, part of the ABC transporter complex NikABCDE involved in nickel import. Responsible for energy coupling to the transport system. The protein is Nickel import ATP-binding protein NikD of Shigella flexneri serotype 5b (strain 8401).